Consider the following 237-residue polypeptide: Ribonuclease PH (237 aa).

Phosphate contacts are provided by residues Arg-86 and 124 to 126 (GTR).

This sequence belongs to the RNase PH family. Homohexameric ring arranged as a trimer of dimers.

It catalyses the reaction tRNA(n+1) + phosphate = tRNA(n) + a ribonucleoside 5'-diphosphate. Its function is as follows. Phosphorolytic 3'-5' exoribonuclease that plays an important role in tRNA 3'-end maturation. Removes nucleotide residues following the 3'-CCA terminus of tRNAs; can also add nucleotides to the ends of RNA molecules by using nucleoside diphosphates as substrates, but this may not be physiologically important. Probably plays a role in initiation of 16S rRNA degradation (leading to ribosome degradation) during starvation. The protein is Ribonuclease PH of Shewanella sediminis (strain HAW-EB3).